Here is a 336-residue protein sequence, read N- to C-terminus: Holliday junction branch migration complex subunit RuvB (336 aa).

Positions Ala-4–Tyr-184 are large ATPase domain (RuvB-L). ATP-binding positions include Ile-23, Arg-24, Gly-65, Lys-68, Thr-69, Thr-70, Glu-131 to Tyr-133, Arg-174, Tyr-184, and Arg-221. Thr-69 serves as a coordination point for Mg(2+). A small ATPAse domain (RuvB-S) region spans residues Gln-185–Asn-255. Positions Ala-258–Pro-336 are head domain (RuvB-H). DNA contacts are provided by Arg-294, Arg-313, and Arg-318.

Belongs to the RuvB family. In terms of assembly, homohexamer. Forms an RuvA(8)-RuvB(12)-Holliday junction (HJ) complex. HJ DNA is sandwiched between 2 RuvA tetramers; dsDNA enters through RuvA and exits via RuvB. An RuvB hexamer assembles on each DNA strand where it exits the tetramer. Each RuvB hexamer is contacted by two RuvA subunits (via domain III) on 2 adjacent RuvB subunits; this complex drives branch migration. In the full resolvosome a probable DNA-RuvA(4)-RuvB(12)-RuvC(2) complex forms which resolves the HJ.

The protein resides in the cytoplasm. The enzyme catalyses ATP + H2O = ADP + phosphate + H(+). Functionally, the RuvA-RuvB-RuvC complex processes Holliday junction (HJ) DNA during genetic recombination and DNA repair, while the RuvA-RuvB complex plays an important role in the rescue of blocked DNA replication forks via replication fork reversal (RFR). RuvA specifically binds to HJ cruciform DNA, conferring on it an open structure. The RuvB hexamer acts as an ATP-dependent pump, pulling dsDNA into and through the RuvAB complex. RuvB forms 2 homohexamers on either side of HJ DNA bound by 1 or 2 RuvA tetramers; 4 subunits per hexamer contact DNA at a time. Coordinated motions by a converter formed by DNA-disengaged RuvB subunits stimulates ATP hydrolysis and nucleotide exchange. Immobilization of the converter enables RuvB to convert the ATP-contained energy into a lever motion, pulling 2 nucleotides of DNA out of the RuvA tetramer per ATP hydrolyzed, thus driving DNA branch migration. The RuvB motors rotate together with the DNA substrate, which together with the progressing nucleotide cycle form the mechanistic basis for DNA recombination by continuous HJ branch migration. Branch migration allows RuvC to scan DNA until it finds its consensus sequence, where it cleaves and resolves cruciform DNA. The protein is Holliday junction branch migration complex subunit RuvB of Salmonella arizonae (strain ATCC BAA-731 / CDC346-86 / RSK2980).